Here is a 481-residue protein sequence, read N- to C-terminus: Glutamate--tRNA ligase (481 aa).

The short motif at Pro28 to Gly38 is the 'HIGH' region element. Residues Arg139 to Pro148 show a composition bias toward basic and acidic residues. The disordered stretch occupies residues Arg139–Arg159. The 'KMSKS' region motif lies at Lys260–Arg264. Lys263 serves as a coordination point for ATP.

Belongs to the class-I aminoacyl-tRNA synthetase family. Glutamate--tRNA ligase type 1 subfamily. As to quaternary structure, monomer.

Its subcellular location is the cytoplasm. It carries out the reaction tRNA(Glu) + L-glutamate + ATP = L-glutamyl-tRNA(Glu) + AMP + diphosphate. Functionally, catalyzes the attachment of glutamate to tRNA(Glu) in a two-step reaction: glutamate is first activated by ATP to form Glu-AMP and then transferred to the acceptor end of tRNA(Glu). The chain is Glutamate--tRNA ligase from Bordetella parapertussis (strain 12822 / ATCC BAA-587 / NCTC 13253).